The following is a 386-amino-acid chain: Methionyl-tRNA formyltransferase, mitochondrial (386 aa).

This sequence belongs to the Fmt family.

The protein resides in the mitochondrion. It carries out the reaction L-methionyl-tRNA(fMet) + (6R)-10-formyltetrahydrofolate = N-formyl-L-methionyl-tRNA(fMet) + (6S)-5,6,7,8-tetrahydrofolate + H(+). In terms of biological role, methionyl-tRNA formyltransferase that formylates methionyl-tRNA in mitochondria and is crucial for translation initiation. The chain is Methionyl-tRNA formyltransferase, mitochondrial (Mtfmt) from Mus musculus (Mouse).